Consider the following 153-residue polypeptide: Aspartate carbamoyltransferase regulatory chain (153 aa).

4 residues coordinate Zn(2+): Cys-109, Cys-114, Cys-138, and Cys-141.

The protein belongs to the PyrI family. In terms of assembly, contains catalytic and regulatory chains. Zn(2+) serves as cofactor.

Functionally, involved in allosteric regulation of aspartate carbamoyltransferase. This is Aspartate carbamoyltransferase regulatory chain from Shigella dysenteriae serotype 1 (strain Sd197).